The primary structure comprises 135 residues: Photosystem II extrinsic protein U (135 aa).

Positions 1-26 (MKNLVRLLAVIALIIGSFWGKVPAQA) are cleaved as a signal peptide.

Belongs to the PsbU family. As to quaternary structure, PSII is composed of 1 copy each of membrane proteins PsbA, PsbB, PsbC, PsbD, PsbE, PsbF, PsbH, PsbI, PsbJ, PsbK, PsbL, PsbM, PsbT, PsbX, PsbY, PsbZ, Psb30/Ycf12, peripheral proteins PsbO, CyanoQ (PsbQ), PsbU, PsbV and a large number of cofactors. It forms dimeric complexes.

It localises to the cellular thylakoid membrane. Functionally, one of the extrinsic, lumenal subunits of photosystem II (PSII). PSII is a light-driven water plastoquinone oxidoreductase, using light energy to abstract electrons from H(2)O, generating a proton gradient subsequently used for ATP formation. The extrinsic proteins stabilize the structure of photosystem II oxygen-evolving complex (OEC), the ion environment of oxygen evolution and protect the OEC against heat-induced inactivation. This Microcystis aeruginosa (strain NIES-843 / IAM M-2473) protein is Photosystem II extrinsic protein U.